Consider the following 305-residue polypeptide: Dihydroorotate dehydrogenase B (NAD(+)), catalytic subunit (305 aa).

Residues S23 and K47–G48 each bind FMN. Substrate-binding positions include K47 and N71–L75. Residues N101 and N129 each coordinate FMN. Residue N129 participates in substrate binding. The Nucleophile role is filled by C132. FMN-binding residues include K167 and I193. N194–T195 is a binding site for substrate. FMN-binding positions include G219, G245–G246, and G267–T268.

Belongs to the dihydroorotate dehydrogenase family. Type 1 subfamily. Heterotetramer of 2 PyrK and 2 PyrD type B subunits. FMN is required as a cofactor.

Its subcellular location is the cytoplasm. The enzyme catalyses (S)-dihydroorotate + NAD(+) = orotate + NADH + H(+). The protein operates within pyrimidine metabolism; UMP biosynthesis via de novo pathway; orotate from (S)-dihydroorotate (NAD(+) route): step 1/1. In terms of biological role, catalyzes the conversion of dihydroorotate to orotate with NAD(+) as electron acceptor. The protein is Dihydroorotate dehydrogenase B (NAD(+)), catalytic subunit (pyrD) of Geotalea uraniireducens (strain Rf4) (Geobacter uraniireducens).